Consider the following 114-residue polypeptide: Ribonuclease P protein component (114 aa).

This sequence belongs to the RnpA family. As to quaternary structure, consists of a catalytic RNA component (M1 or rnpB) and a protein subunit.

The catalysed reaction is Endonucleolytic cleavage of RNA, removing 5'-extranucleotides from tRNA precursor.. Functionally, RNaseP catalyzes the removal of the 5'-leader sequence from pre-tRNA to produce the mature 5'-terminus. It can also cleave other RNA substrates such as 4.5S RNA. The protein component plays an auxiliary but essential role in vivo by binding to the 5'-leader sequence and broadening the substrate specificity of the ribozyme. This is Ribonuclease P protein component from Borrelia turicatae (strain 91E135).